A 380-amino-acid polypeptide reads, in one-letter code: Cytochrome b (380 aa).

Transmembrane regions (helical) follow at residues 33 to 53 (FGSLLGLCLIAQILTGLFLAM), 77 to 98 (WLIRNLHANGASFFFICLYLHV), 113 to 133 (WNIGVVLLLLVMMTAFVGYVL), and 178 to 198 (FFAFHFLFPFIIAAMVLLHLL). Positions 83 and 97 each coordinate heme b. Heme b-binding residues include His182 and His196. Position 201 (His201) interacts with a ubiquinone. Helical transmembrane passes span 226–246 (YKDLFGFVILLLALSILTLFS), 288–308 (LGGVLALLASILILMVVPLLH), 320–340 (LTQILFWTLVADVAILTWIGG), and 347–367 (FITVGQVASVLYFALFLILIP).

The protein belongs to the cytochrome b family. In terms of assembly, the cytochrome bc1 complex contains 3 respiratory subunits (MT-CYB, CYC1 and UQCRFS1), 2 core proteins (UQCRC1 and UQCRC2) and probably 6 low-molecular weight proteins. It depends on heme b as a cofactor.

It localises to the mitochondrion inner membrane. In terms of biological role, component of the ubiquinol-cytochrome c reductase complex (complex III or cytochrome b-c1 complex) that is part of the mitochondrial respiratory chain. The b-c1 complex mediates electron transfer from ubiquinol to cytochrome c. Contributes to the generation of a proton gradient across the mitochondrial membrane that is then used for ATP synthesis. The sequence is that of Cytochrome b (mt-cyb) from Allocyttus niger (Black oreo dory).